Reading from the N-terminus, the 627-residue chain is Protein fem-1 homolog B (627 aa).

6 ANK repeats span residues 45–74 (QRST…VQTQ), 87–116 (DGAT…NVNH), 120–149 (TNST…NISI), 153–182 (YDNT…DPNA), 186–215 (CGAT…AMMV), and 218–248 (HGMT…NRRS). One copy of the TPR repeat lies at 344-377 (SHPIIYRGAVYADNMEFEQCIKLWLHALHLRQKG). ANK repeat units lie at residues 483 to 527 (DGST…DVNA) and 531 to 568 (EGNS…HTDM).

This sequence belongs to the fem-1 family. As to quaternary structure, component of a CRL2 E3 ubiquitin-protein ligase complex, also named ECS (Elongin BC-CUL2/5-SOCS-box protein) complex.

It is found in the cytoplasm. It localises to the nucleus. It functions in the pathway protein modification; protein ubiquitination. Substrate-recognition component of a Cul2-RING (CRL2) E3 ubiquitin-protein ligase complex of the DesCEND (destruction via C-end degrons) pathway, which recognizes a C-degron located at the extreme C terminus of target proteins, leading to their ubiquitination and degradation. The C-degron recognized by the DesCEND pathway is usually a motif of less than ten residues and can be present in full-length proteins, truncated proteins or proteolytically cleaved forms. The CRL2(FEM1B) complex specifically recognizes proteins ending with -Gly-Leu-Asp-Arg, leading to their ubiquitination and degradation. The protein is Protein fem-1 homolog B of Gallus gallus (Chicken).